A 354-amino-acid polypeptide reads, in one-letter code: Phospho-N-acetylmuramoyl-pentapeptide-transferase (354 aa).

Transmembrane regions (helical) follow at residues 23-43 (FSFF…IAWA), 66-86 (TPTM…LLCA), 88-108 (LDNV…ALGF), 130-150 (LAVQ…HGEL), 161-181 (FALL…IVAA), 193-213 (GLAS…AYIC), 230-250 (VGET…FLWF), 257-277 (VFMG…MGVM), 282-302 (ILLI…ILQV), and 331-351 (KIIV…LTAL).

Belongs to the glycosyltransferase 4 family. MraY subfamily. Mg(2+) is required as a cofactor.

The protein resides in the cell inner membrane. It catalyses the reaction UDP-N-acetyl-alpha-D-muramoyl-L-alanyl-gamma-D-glutamyl-meso-2,6-diaminopimeloyl-D-alanyl-D-alanine + di-trans,octa-cis-undecaprenyl phosphate = di-trans,octa-cis-undecaprenyl diphospho-N-acetyl-alpha-D-muramoyl-L-alanyl-D-glutamyl-meso-2,6-diaminopimeloyl-D-alanyl-D-alanine + UMP. It participates in cell wall biogenesis; peptidoglycan biosynthesis. Its function is as follows. Catalyzes the initial step of the lipid cycle reactions in the biosynthesis of the cell wall peptidoglycan: transfers peptidoglycan precursor phospho-MurNAc-pentapeptide from UDP-MurNAc-pentapeptide onto the lipid carrier undecaprenyl phosphate, yielding undecaprenyl-pyrophosphoryl-MurNAc-pentapeptide, known as lipid I. The polypeptide is Phospho-N-acetylmuramoyl-pentapeptide-transferase (Campylobacter curvus (strain 525.92)).